The sequence spans 171 residues: Protein BTG1 (171 aa).

Residue S159 is modified to Phosphoserine.

Belongs to the BTG family. Interacts with CNOT7 and CNOT8.

Anti-proliferative protein. The polypeptide is Protein BTG1 (Btg1) (Rattus norvegicus (Rat)).